A 359-amino-acid polypeptide reads, in one-letter code: Chorismate synthase (359 aa).

NADP(+)-binding residues include Arg48 and Arg54. Residues 125-127 (RSS), 243-244 (NA), Gly283, 298-302 (KPTSS), and Arg324 each bind FMN.

It belongs to the chorismate synthase family. Homotetramer. FMNH2 serves as cofactor.

The enzyme catalyses 5-O-(1-carboxyvinyl)-3-phosphoshikimate = chorismate + phosphate. It participates in metabolic intermediate biosynthesis; chorismate biosynthesis; chorismate from D-erythrose 4-phosphate and phosphoenolpyruvate: step 7/7. Catalyzes the anti-1,4-elimination of the C-3 phosphate and the C-6 proR hydrogen from 5-enolpyruvylshikimate-3-phosphate (EPSP) to yield chorismate, which is the branch point compound that serves as the starting substrate for the three terminal pathways of aromatic amino acid biosynthesis. This reaction introduces a second double bond into the aromatic ring system. The chain is Chorismate synthase from Mannheimia succiniciproducens (strain KCTC 0769BP / MBEL55E).